A 344-amino-acid chain; its full sequence is Phenylalanine--tRNA ligase alpha subunit (344 aa).

E256 lines the Mg(2+) pocket.

This sequence belongs to the class-II aminoacyl-tRNA synthetase family. Phe-tRNA synthetase alpha subunit type 1 subfamily. As to quaternary structure, tetramer of two alpha and two beta subunits. Mg(2+) serves as cofactor.

The protein resides in the cytoplasm. The enzyme catalyses tRNA(Phe) + L-phenylalanine + ATP = L-phenylalanyl-tRNA(Phe) + AMP + diphosphate + H(+). The chain is Phenylalanine--tRNA ligase alpha subunit from Bacillus cytotoxicus (strain DSM 22905 / CIP 110041 / 391-98 / NVH 391-98).